Consider the following 21-residue polypeptide: Hemocyanin subunit 6 (21 aa).

The protein belongs to the tyrosinase family. Hemocyanin subfamily. Hemolymph.

It is found in the secreted. The protein resides in the extracellular space. In terms of biological role, hemocyanins are copper-containing oxygen carriers occurring freely dissolved in the hemolymph of many mollusks and arthropods. The polypeptide is Hemocyanin subunit 6 (Maja squinado (Mediterranean spider crab)).